Reading from the N-terminus, the 204-residue chain is MAPKIAIIFYSTWGHVQTLAEAEAKGIREAGGSVDLYRVPETLTQEVLTKMHAPPKDDSIPEITDPFILEQYDRFPHGHPTRYGNFPAQWRTFWDRTGGQWQTGAFWGKYAGLFISTGTQGGGQESTALAAMSTLSHHGIIYVPLGYKTTFHLLGDNSEVRGAAVWGAGTFSGGDGSRQPSQKELELTAQGKAFYEAVAKVNFQ.

A Flavodoxin-like domain is found at 5–195; the sequence is IAIIFYSTWG…ELTAQGKAFY (191 aa).

Belongs to the WrbA family.

The protein localises to the cytoplasm. The chain is Minor allergen Cla h 7 (CLAH7) from Davidiella tassiana (Mycosphaerella tassiana).